The chain runs to 170 residues: Protein SprT (170 aa).

One can recognise a SprT-like domain in the interval 22–163; sequence LQQANLTLQT…RCRRCGKTLR (142 aa). Residue His78 participates in Zn(2+) binding. Glu79 is an active-site residue. His82 provides a ligand contact to Zn(2+).

Belongs to the SprT family. It depends on Zn(2+) as a cofactor.

It is found in the cytoplasm. In Pectobacterium carotovorum subsp. carotovorum (strain PC1), this protein is Protein SprT.